We begin with the raw amino-acid sequence, 217 residues long: Ribosomal RNA small subunit methyltransferase G (217 aa).

S-adenosyl-L-methionine contacts are provided by residues glycine 79, phenylalanine 84, 130-131 (AE), and arginine 148.

Belongs to the methyltransferase superfamily. RNA methyltransferase RsmG family.

The protein resides in the cytoplasm. The enzyme catalyses guanosine(527) in 16S rRNA + S-adenosyl-L-methionine = N(7)-methylguanosine(527) in 16S rRNA + S-adenosyl-L-homocysteine. Functionally, specifically methylates the N7 position of guanine in position 527 of 16S rRNA. This chain is Ribosomal RNA small subunit methyltransferase G, found in Myxococcus xanthus (strain DK1622).